The chain runs to 426 residues: Serine/threonine-protein kinase ssn3 (426 aa).

The 328-residue stretch at 41 to 368 folds into the Protein kinase domain; that stretch reads YHIVGFISSG…AQEALEHPYF (328 aa). ATP-binding positions include 47-55 and K71; that span reads ISSGTYGRV. Residue D173 is the Proton acceptor of the active site. Residues 390 to 426 are disordered; it reads RVTQDDNDIRSGSLPGTKRSGLPDDSLMGRAAKRLKE.

It belongs to the protein kinase superfamily. CMGC Ser/Thr protein kinase family. CDC2/CDKX subfamily. As to quaternary structure, component of the srb8-11 complex, a regulatory module of the Mediator complex. Mg(2+) is required as a cofactor.

It localises to the nucleus. It carries out the reaction L-seryl-[protein] + ATP = O-phospho-L-seryl-[protein] + ADP + H(+). The enzyme catalyses L-threonyl-[protein] + ATP = O-phospho-L-threonyl-[protein] + ADP + H(+). The catalysed reaction is [DNA-directed RNA polymerase] + ATP = phospho-[DNA-directed RNA polymerase] + ADP + H(+). Functionally, component of the srb8-11 complex. The srb8-11 complex is a regulatory module of the Mediator complex which is itself involved in regulation of basal and activated RNA polymerase II-dependent transcription. The srb8-11 complex may be involved in the transcriptional repression of a subset of genes regulated by Mediator. It may inhibit the association of the Mediator complex with RNA polymerase II to form the holoenzyme complex. The srb8-11 complex phosphorylates the C-terminal domain (CTD) of the largest subunit of RNA polymerase II. This is Serine/threonine-protein kinase ssn3 (ssn3) from Aspergillus clavatus (strain ATCC 1007 / CBS 513.65 / DSM 816 / NCTC 3887 / NRRL 1 / QM 1276 / 107).